A 212-amino-acid polypeptide reads, in one-letter code: Pyridoxine/pyridoxamine 5'-phosphate oxidase (212 aa).

Residues 59-64, 74-75, K81, and Q103 contribute to the FMN site; these read RMVLMK and YS. Residue K64 participates in substrate binding. 2 residues coordinate substrate: Y121 and R125. FMN contacts are provided by residues 138–139 and W183; that span reads QS. Residue 189 to 191 coordinates substrate; sequence RLH. R193 contributes to the FMN binding site.

Belongs to the pyridoxamine 5'-phosphate oxidase family. In terms of assembly, homodimer. The cofactor is FMN.

It catalyses the reaction pyridoxamine 5'-phosphate + O2 + H2O = pyridoxal 5'-phosphate + H2O2 + NH4(+). The catalysed reaction is pyridoxine 5'-phosphate + O2 = pyridoxal 5'-phosphate + H2O2. It participates in cofactor metabolism; pyridoxal 5'-phosphate salvage; pyridoxal 5'-phosphate from pyridoxamine 5'-phosphate: step 1/1. It functions in the pathway cofactor metabolism; pyridoxal 5'-phosphate salvage; pyridoxal 5'-phosphate from pyridoxine 5'-phosphate: step 1/1. Functionally, catalyzes the oxidation of either pyridoxine 5'-phosphate (PNP) or pyridoxamine 5'-phosphate (PMP) into pyridoxal 5'-phosphate (PLP). In Rhodopseudomonas palustris (strain HaA2), this protein is Pyridoxine/pyridoxamine 5'-phosphate oxidase.